The sequence spans 330 residues: 4-hydroxythreonine-4-phosphate dehydrogenase (330 aa).

Positions 133 and 134 each coordinate substrate. A divalent metal cation-binding residues include His163, His208, and His263. Residues Lys271, Asn280, and Arg289 each contribute to the substrate site.

The protein belongs to the PdxA family. Homodimer. Zn(2+) is required as a cofactor. The cofactor is Mg(2+). Requires Co(2+) as cofactor.

It is found in the cytoplasm. It carries out the reaction 4-(phosphooxy)-L-threonine + NAD(+) = 3-amino-2-oxopropyl phosphate + CO2 + NADH. It participates in cofactor biosynthesis; pyridoxine 5'-phosphate biosynthesis; pyridoxine 5'-phosphate from D-erythrose 4-phosphate: step 4/5. In terms of biological role, catalyzes the NAD(P)-dependent oxidation of 4-(phosphooxy)-L-threonine (HTP) into 2-amino-3-oxo-4-(phosphooxy)butyric acid which spontaneously decarboxylates to form 3-amino-2-oxopropyl phosphate (AHAP). This Azoarcus sp. (strain BH72) protein is 4-hydroxythreonine-4-phosphate dehydrogenase.